Consider the following 133-residue polypeptide: Small ribosomal subunit protein uS9 (133 aa).

The span at 98-113 (RKPLKTEGHLSRDPRA) shows a compositional bias: basic and acidic residues. The interval 98–133 (RKPLKTEGHLSRDPRAKERRKYGLKKARKAPQFSKR) is disordered. A compositionally biased stretch (basic residues) spans 114–133 (KERRKYGLKKARKAPQFSKR).

Belongs to the universal ribosomal protein uS9 family.

The sequence is that of Small ribosomal subunit protein uS9 from Synechococcus sp. (strain CC9902).